The primary structure comprises 146 residues: ATP synthase epsilon chain (146 aa).

Positions 102-122 (QSAKKRAEQHMQEAKEKHNER) are disordered.

This sequence belongs to the ATPase epsilon chain family. F-type ATPases have 2 components, CF(1) - the catalytic core - and CF(0) - the membrane proton channel. CF(1) has five subunits: alpha(3), beta(3), gamma(1), delta(1), epsilon(1). CF(0) has three main subunits: a, b and c.

The protein localises to the cell membrane. Produces ATP from ADP in the presence of a proton gradient across the membrane. This is ATP synthase epsilon chain from Lactobacillus gasseri (strain ATCC 33323 / DSM 20243 / BCRC 14619 / CIP 102991 / JCM 1131 / KCTC 3163 / NCIMB 11718 / NCTC 13722 / AM63).